Here is a 326-residue protein sequence, read N- to C-terminus: Melanocortin receptor 4 (326 aa).

Over residues 1–14 (MNTSHHHGLHHSFR) the composition is skewed to basic residues. The segment at 1–31 (MNTSHHHGLHHSFRNHSQGALPVGKPSHGDR) is disordered. At 1–46 (MNTSHHHGLHHSFRNHSQGALPVGKPSHGDRGSASGCYEQLLISTE) the chain is on the extracellular side. Residues Asn2 and Asn15 are each glycosylated (N-linked (GlcNAc...) asparagine). A helical membrane pass occupies residues 47–67 (IFLTLGLVSLLENILVIAAIV). Residues 68–71 (KNKN) lie on the Cytoplasmic side of the membrane. Residues 72–92 (LHSPMYFFICSLAVADLLVSV) traverse the membrane as a helical segment. Topologically, residues 93 to 121 (SNASETVVMALITGGNLTNRESIIKNMDN) are extracellular. Asn94 and Asn108 each carry an N-linked (GlcNAc...) asparagine glycan. A helical transmembrane segment spans residues 122–142 (VFDSMICSSLLASIWSLLAIA). Topologically, residues 143–163 (VDRYITIFYALRYHNIMTQRR) are cytoplasmic. A helical transmembrane segment spans residues 164-184 (AGTIITCIWTFCTVSGVLFIV). The Extracellular portion of the chain corresponds to 185-190 (YSESTT). Residues 191 to 211 (VLICLISMFFTMLALMASLYV) traverse the membrane as a helical segment. Topologically, residues 212-246 (HMFLLARLHMKRIAALPGNGPIWQAANMKGAITIT) are cytoplasmic. The chain crosses the membrane as a helical span at residues 247-267 (ILLGVFVVCWAPFFLHLILMI). The Extracellular segment spans residues 268-281 (SCPRNPYCVCFMSH). Residues 282–302 (FNMYLILIMCNSVIDPLIYAF) traverse the membrane as a helical segment. Topologically, residues 303-326 (RSQEMRKTFKEICCCWYGLASLCV) are cytoplasmic. Cys316 carries the S-palmitoyl cysteine lipid modification.

This sequence belongs to the G-protein coupled receptor 1 family. In terms of assembly, homodimer; disulfide-linked, also forms higher order oligomers. Interacts with mrap2a; decreasing ligand-sensitivity. Interacts with mrap2b; increasing ligand-sensitivity and generation of cAMP.

The protein resides in the cell membrane. Functionally, receptor specific to the heptapeptide core common to adrenocorticotropic hormone and alpha-, beta-, and gamma-MSH. Plays a central role in energy homeostasis and somatic growth. This receptor is mediated by G proteins that stimulate adenylate cyclase (cAMP). The protein is Melanocortin receptor 4 (mc4r) of Danio rerio (Zebrafish).